A 57-amino-acid chain; its full sequence is UPF0391 membrane protein Nham_2738 (57 aa).

The next 2 membrane-spanning stretches (helical) occupy residues 4 to 24 (WVVT…GGLA) and 30 to 50 (IAKI…VVGL).

Belongs to the UPF0391 family.

The protein localises to the cell membrane. The chain is UPF0391 membrane protein Nham_2738 from Nitrobacter hamburgensis (strain DSM 10229 / NCIMB 13809 / X14).